The following is a 415-amino-acid chain: uncharacterized protein (415 aa).

[4Fe-4S] cluster-binding residues include cysteine 66, cysteine 72, cysteine 75, and cysteine 149. 4 residues coordinate S-adenosyl-L-methionine: glutamine 249, phenylalanine 276, glutamate 296, and aspartate 344. Cysteine 370 serves as the catalytic Nucleophile.

The protein belongs to the class I-like SAM-binding methyltransferase superfamily. RNA M5U methyltransferase family.

This is an uncharacterized protein from Brucella melitensis biotype 1 (strain ATCC 23456 / CCUG 17765 / NCTC 10094 / 16M).